A 204-amino-acid chain; its full sequence is Venom allergen 5 (204 aa).

Cystine bridges form between Cys4–Cys17, Cys8–Cys101, Cys26–Cys94, and Cys170–Cys187. The SCP domain occupies 45-189 (LKEHNDFRQK…WHKHYLVCNY (145 aa)).

The protein belongs to the CRISP family. Venom allergen 5-like subfamily. As to expression, expressed by the venom gland.

It is found in the secreted. In Vespula pensylvanica (Western yellow jacket), this protein is Venom allergen 5.